The following is a 431-amino-acid chain: Glutamate--tRNA ligase 2 (431 aa).

The short motif at 6–16 (PSPTGDMHIGN) is the 'HIGH' region element. The short motif at 235-239 (KMSKR) is the 'KMSKS' region element. K238 serves as a coordination point for ATP.

It belongs to the class-I aminoacyl-tRNA synthetase family. Glutamate--tRNA ligase type 1 subfamily. As to quaternary structure, monomer.

The protein resides in the cytoplasm. It carries out the reaction tRNA(Glu) + L-glutamate + ATP = L-glutamyl-tRNA(Glu) + AMP + diphosphate. Its function is as follows. Catalyzes the attachment of glutamate to tRNA(Glu) in a two-step reaction: glutamate is first activated by ATP to form Glu-AMP and then transferred to the acceptor end of tRNA(Glu). The protein is Glutamate--tRNA ligase 2 of Campylobacter jejuni subsp. doylei (strain ATCC BAA-1458 / RM4099 / 269.97).